Here is a 348-residue protein sequence, read N- to C-terminus: MTVRIAINGFGRIGRNVVRALYESGRRAEITVVAINELADAAGMAHLLKYDTSHGRFAWEVRHEREQLFVGDDVIRILHERTLADLPWRELGVDIVLDCTGVYGNREHGEAHIAAGAKKVLFSHPGSNDLDATVVFGVNQNQLRAEHRIVSNASCTTNCIIPVIKLLDDAYGIESGTVTTIHSAMNDQQVIDAYHSDLRRTRAASQSIIPVDTKLAAGITRIFPQFNDRFEAIAVRVPTINVTAIDLSVTVKKPVKASEVNQLLQKAAQGAFHGIVDYTESPLVSIDFNHDPHSAIVDGTQTRVSGAHLIKTLVWCDNEWGFANRMLDTTLAMAAVGFRLDASASTKL.

NAD(+) contacts are provided by residues 12–13 (RI) and Arg-81. Substrate is bound by residues 154–156 (SCT), Arg-200, 213–214 (TK), and Arg-236. Cys-155 serves as the catalytic Nucleophile. An NAD(+)-binding site is contributed by Asn-318.

It belongs to the glyceraldehyde-3-phosphate dehydrogenase family. Epd subfamily. Homotetramer.

The protein localises to the cytoplasm. The catalysed reaction is D-erythrose 4-phosphate + NAD(+) + H2O = 4-phospho-D-erythronate + NADH + 2 H(+). Its pathway is cofactor biosynthesis; pyridoxine 5'-phosphate biosynthesis; pyridoxine 5'-phosphate from D-erythrose 4-phosphate: step 1/5. Its function is as follows. Catalyzes the NAD-dependent conversion of D-erythrose 4-phosphate to 4-phosphoerythronate. This chain is D-erythrose-4-phosphate dehydrogenase, found in Salmonella schwarzengrund (strain CVM19633).